The following is a 307-amino-acid chain: Porphobilinogen deaminase (307 aa).

Cysteine 241 carries the S-(dipyrrolylmethanemethyl)cysteine modification.

This sequence belongs to the HMBS family. Monomer. Requires dipyrromethane as cofactor.

The enzyme catalyses 4 porphobilinogen + H2O = hydroxymethylbilane + 4 NH4(+). The protein operates within porphyrin-containing compound metabolism; protoporphyrin-IX biosynthesis; coproporphyrinogen-III from 5-aminolevulinate: step 2/4. Functionally, tetrapolymerization of the monopyrrole PBG into the hydroxymethylbilane pre-uroporphyrinogen in several discrete steps. This is Porphobilinogen deaminase from Coxiella burnetii (strain CbuK_Q154) (Coxiella burnetii (strain Q154)).